We begin with the raw amino-acid sequence, 242 residues long: Octanoyltransferase (242 aa).

The region spanning 31–206 (SQTTDEIWFL…LFLKNFGYNQ (176 aa)) is the BPL/LPL catalytic domain. Residues 70-77 (RGGQVTYH), 137-139 (SIG), and 150-152 (GLA) contribute to the substrate site. The active-site Acyl-thioester intermediate is the Cys168.

Belongs to the LipB family.

The protein localises to the cytoplasm. It catalyses the reaction octanoyl-[ACP] + L-lysyl-[protein] = N(6)-octanoyl-L-lysyl-[protein] + holo-[ACP] + H(+). It participates in protein modification; protein lipoylation via endogenous pathway; protein N(6)-(lipoyl)lysine from octanoyl-[acyl-carrier-protein]: step 1/2. In terms of biological role, catalyzes the transfer of endogenously produced octanoic acid from octanoyl-acyl-carrier-protein onto the lipoyl domains of lipoate-dependent enzymes. Lipoyl-ACP can also act as a substrate although octanoyl-ACP is likely to be the physiological substrate. In Coxiella burnetii (strain CbuK_Q154) (Coxiella burnetii (strain Q154)), this protein is Octanoyltransferase.